The sequence spans 430 residues: Tol-Pal system protein TolB (430 aa).

A signal peptide spans 1–21 (MKQALRVAFGFLMLWAAMLHA).

It belongs to the TolB family. The Tol-Pal system is composed of five core proteins: the inner membrane proteins TolA, TolQ and TolR, the periplasmic protein TolB and the outer membrane protein Pal. They form a network linking the inner and outer membranes and the peptidoglycan layer.

Its subcellular location is the periplasm. Its function is as follows. Part of the Tol-Pal system, which plays a role in outer membrane invagination during cell division and is important for maintaining outer membrane integrity. TolB occupies a key intermediary position in the Tol-Pal system because it communicates directly with both membrane-embedded components, Pal in the outer membrane and TolA in the inner membrane. This Escherichia fergusonii (strain ATCC 35469 / DSM 13698 / CCUG 18766 / IAM 14443 / JCM 21226 / LMG 7866 / NBRC 102419 / NCTC 12128 / CDC 0568-73) protein is Tol-Pal system protein TolB.